A 218-amino-acid polypeptide reads, in one-letter code: LexA repressor (218 aa).

Residues 31-51 (IREIQDGLRISSTSVVAYNLR) constitute a DNA-binding region (H-T-H motif). Residues Ser137 and Lys176 each act as for autocatalytic cleavage activity in the active site.

The protein belongs to the peptidase S24 family. As to quaternary structure, homodimer.

It carries out the reaction Hydrolysis of Ala-|-Gly bond in repressor LexA.. Functionally, represses a number of genes involved in the response to DNA damage (SOS response), including recA and lexA. In the presence of single-stranded DNA, RecA interacts with LexA causing an autocatalytic cleavage which disrupts the DNA-binding part of LexA, leading to derepression of the SOS regulon and eventually DNA repair. This is LexA repressor from Roseiflexus sp. (strain RS-1).